A 106-amino-acid chain; its full sequence is uncharacterized protein (106 aa).

The next 3 membrane-spanning stretches (helical) occupy residues 5 to 27 (IFVI…GIII), 42 to 64 (AVAA…LAYM), and 76 to 98 (LPYI…TNFF).

It is found in the cell membrane. This is an uncharacterized protein from Archaeoglobus fulgidus (strain ATCC 49558 / DSM 4304 / JCM 9628 / NBRC 100126 / VC-16).